A 251-amino-acid polypeptide reads, in one-letter code: Triosephosphate isomerase (251 aa).

9 to 11 (NWK) provides a ligand contact to substrate. Residue histidine 95 is the Electrophile of the active site. Catalysis depends on glutamate 167, which acts as the Proton acceptor. Residues glycine 173, serine 213, and 234 to 235 (GG) each bind substrate. Residue serine 213 is modified to Phosphoserine.

This sequence belongs to the triosephosphate isomerase family. As to quaternary structure, homodimer.

It is found in the cytoplasm. It catalyses the reaction D-glyceraldehyde 3-phosphate = dihydroxyacetone phosphate. Its pathway is carbohydrate biosynthesis; gluconeogenesis. It functions in the pathway carbohydrate degradation; glycolysis; D-glyceraldehyde 3-phosphate from glycerone phosphate: step 1/1. Functionally, involved in the gluconeogenesis. Catalyzes stereospecifically the conversion of dihydroxyacetone phosphate (DHAP) to D-glyceraldehyde-3-phosphate (G3P). The protein is Triosephosphate isomerase of Bacillus cytotoxicus (strain DSM 22905 / CIP 110041 / 391-98 / NVH 391-98).